The sequence spans 121 residues: Fluoride-specific ion channel FluC 2 (121 aa).

The next 4 helical transmembrane spans lie at 3–23 (YLFI…LSFI), 31–51 (IGTF…GTLA), 64–84 (GITT…FELV), and 92–112 (FILL…LCFL). Positions 71 and 74 each coordinate Na(+).

The protein belongs to the fluoride channel Fluc/FEX (TC 1.A.43) family.

It is found in the cell membrane. It carries out the reaction fluoride(in) = fluoride(out). Na(+) is not transported, but it plays an essential structural role and its presence is essential for fluoride channel function. Fluoride-specific ion channel. Important for reducing fluoride concentration in the cell, thus reducing its toxicity. The polypeptide is Fluoride-specific ion channel FluC 2 (Staphylococcus saprophyticus subsp. saprophyticus (strain ATCC 15305 / DSM 20229 / NCIMB 8711 / NCTC 7292 / S-41)).